The primary structure comprises 220 residues: Ribosomal RNA large subunit methyltransferase E (220 aa).

S-adenosyl-L-methionine contacts are provided by Gly-60, Trp-62, Asp-92, Asp-108, and Asp-133. Lys-173 functions as the Proton acceptor in the catalytic mechanism.

This sequence belongs to the class I-like SAM-binding methyltransferase superfamily. RNA methyltransferase RlmE family.

It localises to the cytoplasm. The enzyme catalyses uridine(2552) in 23S rRNA + S-adenosyl-L-methionine = 2'-O-methyluridine(2552) in 23S rRNA + S-adenosyl-L-homocysteine + H(+). Its function is as follows. Specifically methylates the uridine in position 2552 of 23S rRNA at the 2'-O position of the ribose in the fully assembled 50S ribosomal subunit. The polypeptide is Ribosomal RNA large subunit methyltransferase E (Paraburkholderia phymatum (strain DSM 17167 / CIP 108236 / LMG 21445 / STM815) (Burkholderia phymatum)).